The sequence spans 668 residues: tRNA 5-methylaminomethyl-2-thiouridine biosynthesis bifunctional protein MnmC (668 aa).

The interval 1–245 (MKHYAIQPAN…KREMLCGVME (245 aa)) is tRNA (mnm(5)s(2)U34)-methyltransferase. The interval 270–668 (IGGGIASALL…LLKGKAVKAG (399 aa)) is FAD-dependent cmnm(5)s(2)U34 oxidoreductase.

In the N-terminal section; belongs to the methyltransferase superfamily. tRNA (mnm(5)s(2)U34)-methyltransferase family. It in the C-terminal section; belongs to the DAO family. The cofactor is FAD.

The protein localises to the cytoplasm. The catalysed reaction is 5-aminomethyl-2-thiouridine(34) in tRNA + S-adenosyl-L-methionine = 5-methylaminomethyl-2-thiouridine(34) in tRNA + S-adenosyl-L-homocysteine + H(+). Functionally, catalyzes the last two steps in the biosynthesis of 5-methylaminomethyl-2-thiouridine (mnm(5)s(2)U) at the wobble position (U34) in tRNA. Catalyzes the FAD-dependent demodification of cmnm(5)s(2)U34 to nm(5)s(2)U34, followed by the transfer of a methyl group from S-adenosyl-L-methionine to nm(5)s(2)U34, to form mnm(5)s(2)U34. In Escherichia coli O139:H28 (strain E24377A / ETEC), this protein is tRNA 5-methylaminomethyl-2-thiouridine biosynthesis bifunctional protein MnmC.